The sequence spans 313 residues: Formimidoylglutamase (313 aa).

Residues histidine 130, aspartate 155, histidine 157, aspartate 159, aspartate 241, and aspartate 243 each contribute to the Mn(2+) site.

Belongs to the arginase family. Mn(2+) serves as cofactor.

It catalyses the reaction N-formimidoyl-L-glutamate + H2O = formamide + L-glutamate. The protein operates within amino-acid degradation; L-histidine degradation into L-glutamate; L-glutamate from N-formimidoyl-L-glutamate (hydrolase route): step 1/1. In terms of biological role, catalyzes the conversion of N-formimidoyl-L-glutamate to L-glutamate and formamide. This is Formimidoylglutamase from Salmonella arizonae (strain ATCC BAA-731 / CDC346-86 / RSK2980).